Reading from the N-terminus, the 319-residue chain is Ribosomal RNA small subunit methyltransferase H (319 aa).

S-adenosyl-L-methionine contacts are provided by residues 52–54 (GGH), Asp-70, Phe-100, Asp-126, and Gln-133. A disordered region spans residues 289-319 (PKPLSPSELERQRNPRARSAKLRVAARSSQM).

This sequence belongs to the methyltransferase superfamily. RsmH family.

Its subcellular location is the cytoplasm. The catalysed reaction is cytidine(1402) in 16S rRNA + S-adenosyl-L-methionine = N(4)-methylcytidine(1402) in 16S rRNA + S-adenosyl-L-homocysteine + H(+). Its function is as follows. Specifically methylates the N4 position of cytidine in position 1402 (C1402) of 16S rRNA. The protein is Ribosomal RNA small subunit methyltransferase H of Synechococcus sp. (strain JA-2-3B'a(2-13)) (Cyanobacteria bacterium Yellowstone B-Prime).